The following is a 395-amino-acid chain: Flap endonuclease 1 (395 aa).

The segment at 1-104 is N-domain; the sequence is MGIKHLYQVI…GELAKRSARK (104 aa). Asp-34 lines the Mg(2+) pocket. Positions 47 and 70 each coordinate DNA. Asp-86 lines the Mg(2+) pocket. The tract at residues 94–124 is disordered; that stretch reads GGELAKRSARKREAHEAHEEAKETGTAEDME. Positions 122–253 are I-domain; it reads DMEKFSRRTV…NTALKLIREH (132 aa). The Mg(2+) site is built by Glu-158, Glu-160, Asp-179, and Asp-181. Glu-158 serves as a coordination point for DNA. Residues Gly-231 and Asp-233 each contribute to the DNA site. Asp-233 contributes to the Mg(2+) binding site. The interval 341–349 is interaction with PCNA; that stretch reads QQSRLEGFF. A compositionally biased stretch (basic and acidic residues) spans 356-389; sequence DAEKASMKRKHDEKIEEQKKRKKEDAKAKKEAKA. Residues 356–395 form a disordered region; the sequence is DAEKASMKRKHDEKIEEQKKRKKEDAKAKKEAKARPRGAV.

It belongs to the XPG/RAD2 endonuclease family. FEN1 subfamily. In terms of assembly, interacts with PCNA. Three molecules of fen1 bind to one PCNA trimer with each molecule binding to one PCNA monomer. PCNA stimulates the nuclease activity without altering cleavage specificity. Mg(2+) serves as cofactor. In terms of processing, phosphorylated. Phosphorylation upon DNA damage induces relocalization to the nuclear plasma.

The protein localises to the nucleus. The protein resides in the nucleolus. Its subcellular location is the nucleoplasm. It is found in the mitochondrion. Structure-specific nuclease with 5'-flap endonuclease and 5'-3' exonuclease activities involved in DNA replication and repair. During DNA replication, cleaves the 5'-overhanging flap structure that is generated by displacement synthesis when DNA polymerase encounters the 5'-end of a downstream Okazaki fragment. It enters the flap from the 5'-end and then tracks to cleave the flap base, leaving a nick for ligation. Also involved in the long patch base excision repair (LP-BER) pathway, by cleaving within the apurinic/apyrimidinic (AP) site-terminated flap. Acts as a genome stabilization factor that prevents flaps from equilibrating into structures that lead to duplications and deletions. Also possesses 5'-3' exonuclease activity on nicked or gapped double-stranded DNA, and exhibits RNase H activity. Also involved in replication and repair of rDNA and in repairing mitochondrial DNA. The protein is Flap endonuclease 1 (fen1) of Talaromyces marneffei (strain ATCC 18224 / CBS 334.59 / QM 7333) (Penicillium marneffei).